A 230-amino-acid polypeptide reads, in one-letter code: Ion-translocating oxidoreductase complex subunit E (230 aa).

Helical transmembrane passes span Ala18–Ala38, Leu39–Leu59, Thr63–Val83, Leu86–Val106, Ala128–Met148, and Pro182–Gly202.

Belongs to the NqrDE/RnfAE family. As to quaternary structure, the complex is composed of six subunits: RsxA, RsxB, RsxC, RsxD, RsxE and RsxG.

Its subcellular location is the cell inner membrane. Functionally, part of a membrane-bound complex that couples electron transfer with translocation of ions across the membrane. Required to maintain the reduced state of SoxR. The protein is Ion-translocating oxidoreductase complex subunit E of Escherichia fergusonii (strain ATCC 35469 / DSM 13698 / CCUG 18766 / IAM 14443 / JCM 21226 / LMG 7866 / NBRC 102419 / NCTC 12128 / CDC 0568-73).